We begin with the raw amino-acid sequence, 384 residues long: S-adenosylmethionine synthase (384 aa).

His15 lines the ATP pocket. Asp17 serves as a coordination point for Mg(2+). Glu43 contacts K(+). Positions 56 and 99 each coordinate L-methionine. The tract at residues 99 to 109 (QSPDINQGVDR) is flexible loop. ATP-binding positions include 164–166 (DAK), 230–231 (RF), Asp239, 245–246 (RK), Ala262, and Lys266. Asp239 lines the L-methionine pocket. Lys270 contributes to the L-methionine binding site.

The protein belongs to the AdoMet synthase family. In terms of assembly, homotetramer; dimer of dimers. The cofactor is Mg(2+). K(+) serves as cofactor.

Its subcellular location is the cytoplasm. The catalysed reaction is L-methionine + ATP + H2O = S-adenosyl-L-methionine + phosphate + diphosphate. It functions in the pathway amino-acid biosynthesis; S-adenosyl-L-methionine biosynthesis; S-adenosyl-L-methionine from L-methionine: step 1/1. Catalyzes the formation of S-adenosylmethionine (AdoMet) from methionine and ATP. The overall synthetic reaction is composed of two sequential steps, AdoMet formation and the subsequent tripolyphosphate hydrolysis which occurs prior to release of AdoMet from the enzyme. The protein is S-adenosylmethionine synthase of Salmonella gallinarum (strain 287/91 / NCTC 13346).